Here is a 200-residue protein sequence, read N- to C-terminus: Mediator of RNA polymerase II transcription subunit 22 (200 aa).

Residues 93–122 (SVNEAIDQRNQQLRALQEECDRKLITLRDE) are a coiled coil. Residues 169–200 (PLLASPETGAGPLQSAAPVHSHGGGPGPTEHT) are disordered. Positions 190–200 (HGGGPGPTEHT) are enriched in gly residues.

Belongs to the Mediator complex subunit 22 family. As to quaternary structure, component of the Mediator complex, which is composed of MED1, MED4, MED6, MED7, MED8, MED9, MED10, MED11, MED12, MED13, MED13L, MED14, MED15, MED16, MED17, MED18, MED19, MED20, MED21, MED22, MED23, MED24, MED25, MED26, MED27, MED29, MED30, MED31, CCNC, CDK8 and CDC2L6/CDK11. The MED12, MED13, CCNC and CDK8 subunits form a distinct module termed the CDK8 module. Mediator containing the CDK8 module is less active than Mediator lacking this module in supporting transcriptional activation. Individual preparations of the Mediator complex lacking one or more distinct subunits have been variously termed ARC, CRSP, DRIP, PC2, SMCC and TRAP.

The protein localises to the nucleus. In terms of biological role, component of the Mediator complex, a coactivator involved in the regulated transcription of nearly all RNA polymerase II-dependent genes. Mediator functions as a bridge to convey information from gene-specific regulatory proteins to the basal RNA polymerase II transcription machinery. Mediator is recruited to promoters by direct interactions with regulatory proteins and serves as a scaffold for the assembly of a functional preinitiation complex with RNA polymerase II and the general transcription factors. The polypeptide is Mediator of RNA polymerase II transcription subunit 22 (Med22) (Mus musculus (Mouse)).